Reading from the N-terminus, the 204-residue chain is Leucyl/phenylalanyl-tRNA--protein transferase (204 aa).

This sequence belongs to the L/F-transferase family.

The protein localises to the cytoplasm. It carries out the reaction N-terminal L-lysyl-[protein] + L-leucyl-tRNA(Leu) = N-terminal L-leucyl-L-lysyl-[protein] + tRNA(Leu) + H(+). The catalysed reaction is N-terminal L-arginyl-[protein] + L-leucyl-tRNA(Leu) = N-terminal L-leucyl-L-arginyl-[protein] + tRNA(Leu) + H(+). The enzyme catalyses L-phenylalanyl-tRNA(Phe) + an N-terminal L-alpha-aminoacyl-[protein] = an N-terminal L-phenylalanyl-L-alpha-aminoacyl-[protein] + tRNA(Phe). In terms of biological role, functions in the N-end rule pathway of protein degradation where it conjugates Leu, Phe and, less efficiently, Met from aminoacyl-tRNAs to the N-termini of proteins containing an N-terminal arginine or lysine. This chain is Leucyl/phenylalanyl-tRNA--protein transferase, found in Sinorhizobium medicae (strain WSM419) (Ensifer medicae).